The chain runs to 406 residues: DNA primase DnaG (406 aa).

Positions 169–247 (PNLIIVEGRA…KIDFVARAPI (79 aa)) constitute a Toprim domain. Positions 175, 220, and 222 each coordinate Mg(2+).

Belongs to the archaeal DnaG primase family. In terms of assembly, forms a ternary complex with MCM helicase and DNA. Component of the archaeal exosome complex. Interacts with Csl4 but not with Rrp4. Requires Mg(2+) as cofactor.

It carries out the reaction ssDNA + n NTP = ssDNA/pppN(pN)n-1 hybrid + (n-1) diphosphate.. RNA polymerase that catalyzes the synthesis of short RNA molecules used as primers for DNA polymerase during DNA replication. Can use NTPs but not dNTPs. Binds DNA. Also part of the exosome, which is a complex involved in RNA degradation. Acts as a poly(A)-binding protein that enhances the interaction between heteromeric, adenine-rich transcripts and the exosome. This Saccharolobus solfataricus (strain ATCC 35092 / DSM 1617 / JCM 11322 / P2) (Sulfolobus solfataricus) protein is DNA primase DnaG.